We begin with the raw amino-acid sequence, 615 residues long: Medium-chain acyl-CoA ligase ACSF2, mitochondrial (615 aa).

Residues 1–41 constitute a mitochondrion transit peptide; the sequence is MAVYVGMLRLGRLCAGSSGVLGARVALSRSWQEARLQGVRF. Lys-179 carries the post-translational modification N6-acetyllysine. Lys-182 is modified (N6-acetyllysine; alternate). Lys-182 is modified (N6-succinyllysine; alternate). 263 to 271 is a binding site for ATP; it reads TSGTTGSPK. N6-acetyllysine occurs at positions 340 and 398. Lys-478 is modified (N6-succinyllysine). 2 residues coordinate ATP: Asp-493 and Arg-508. Lys-510 carries the N6-acetyllysine modification. 2 positions are modified to N6-acetyllysine; alternate: Lys-544 and Lys-570. Residues Lys-544 and Lys-570 each carry the N6-succinyllysine; alternate modification. Lys-599 provides a ligand contact to ATP. The residue at position 599 (Lys-599) is an N6-succinyllysine.

Belongs to the ATP-dependent AMP-binding enzyme family.

The protein localises to the mitochondrion. The enzyme catalyses a medium-chain fatty acid + ATP + CoA = a medium-chain fatty acyl-CoA + AMP + diphosphate. It carries out the reaction octanoate + ATP + CoA = octanoyl-CoA + AMP + diphosphate. Functionally, acyl-CoA synthases catalyze the initial reaction in fatty acid metabolism, by forming a thioester with CoA. Has some preference toward medium-chain substrates. Plays a role in adipocyte differentiation. The protein is Medium-chain acyl-CoA ligase ACSF2, mitochondrial of Pongo abelii (Sumatran orangutan).